Reading from the N-terminus, the 307-residue chain is Protein Y (307 aa).

The protein belongs to the ATP-dependent AMP-binding enzyme family.

The protein operates within antibiotic biosynthesis; candicidin biosynthesis. Functionally, may be a p-aminobenzoic acid-CoA ligase that activates PabA to start the biosynthesis of candicidin. The sequence is that of Protein Y from Streptomyces griseus.